A 186-amino-acid chain; its full sequence is Probable chorismate pyruvate-lyase (186 aa).

Residues R78, L116, and E175 each contribute to the substrate site.

Belongs to the UbiC family.

The protein resides in the cytoplasm. The catalysed reaction is chorismate = 4-hydroxybenzoate + pyruvate. It functions in the pathway cofactor biosynthesis; ubiquinone biosynthesis. Removes the pyruvyl group from chorismate, with concomitant aromatization of the ring, to provide 4-hydroxybenzoate (4HB) for the ubiquinone pathway. This Psychromonas ingrahamii (strain DSM 17664 / CCUG 51855 / 37) protein is Probable chorismate pyruvate-lyase.